The following is a 372-amino-acid chain: Zinc finger protein dpff-1 (372 aa).

Residues 108–204 (VGPTTESVSD…SRSIVKETKY (97 aa)) are disordered. Residues 109-131 (GPTTESVSDSSNDSTTIRPSRQT) show a composition bias toward polar residues. The span at 132–141 (QIKEEYRDDY) shows a compositional bias: basic and acidic residues. The segment covering 142–158 (VLDDELSPDEFGSDEDD) has biased composition (acidic residues). A compositionally biased stretch (polar residues) spans 184–196 (TTRSSVSRLTPSR). The C2H2-type zinc-finger motif lies at 212-235 (YPCDKCSAKYKSLAGLSYHQSYLH). 2 PHD-type zinc fingers span residues 256 to 314 (SCDF…CKSC) and 316 to 361 (ICGT…CQVE).

It belongs to the requiem/DPF family.

Its subcellular location is the nucleus. It is found in the cytoplasm. Probable transcription factor, involved in meiosis and stress protection. This chain is Zinc finger protein dpff-1, found in Caenorhabditis elegans.